The primary structure comprises 109 residues: MFSKEGMGDLMKKAQEMQENMKKAQAEIANTEVTGESGAGLVKITILGNHNVRKVEIDPSLMEDDKEMLEDLIAAAMNDAVHRIGEVNKNKMSGVSGGMELPPGFKMPF.

The protein belongs to the YbaB/EbfC family. Homodimer.

It is found in the cytoplasm. Its subcellular location is the nucleoid. Binds to DNA and alters its conformation. May be involved in regulation of gene expression, nucleoid organization and DNA protection. This Psychromonas ingrahamii (strain DSM 17664 / CCUG 51855 / 37) protein is Nucleoid-associated protein Ping_2276.